Here is a 486-residue protein sequence, read N- to C-terminus: Flavin-dependent monooxygenase pboD (486 aa).

D51, G65, and R124 together coordinate FAD. The active site involves R203. Positions 344 and 357 each coordinate FAD.

Belongs to the paxM FAD-dependent monooxygenase family. The cofactor is FAD.

The protein operates within secondary metabolite biosynthesis. In terms of biological role, flavin-dependent monooxygenase; part of the gene cluster that mediates the biosynthesis of protubonine B, a hydroxylated and diacetylated cyclo-L-Trp-L-Leu derivative. Within the pathway, pboD catalyzes the hydroxylation at C-3 of the indole ring of cyclo-L-Trp-L-Leu and subsequent formation of the pyrrolidine ring, eading to the production of protubonine D. PboD is also able to accept other cyclodipeptides (CDPs) as substrates, including cyclo-L-Trp-L-Trp, cyclo-L-Trp-L-Tyr, cyclo-L-Trp-L-Phe, cyclo-L-Trp-L-Met, cyclo-L-Trp-L-Ala, cyclo-L-Trp-L-Pro and cyclo-L-Trp-Gly. Assays with cyclo-L-Trp-L-Trp, cyclo-L-Trp-L-Tyr, cyclo-L-Trp-L-Phe show similar or even slightly higher conversion yields, compared with that of the natural substrate cyclo-L-Trp-L-Leu, whereas cyclo-L-Trp-L-Pro and cyclo-L-Trp-Gly are accepted by PboD but only with conversion yields of 10 and 4%, respectively. Cyclo-L-Trp-L-His is not accepted as a substrate. The first step of the protubonine B synthesis is performed by the nonribosomal peptide synthetase pboA that catalyzes the formation of cyclo-L-Trp-L-Leu by condensing L-Leu with L-Trp. The flavin-dependent monooxygenase pboD is responsible for hydroxylation at C-3 of the indole ring and subsequent formation of the pyrrolidine ring, leadind to protubonine D. Protubonine D is further diacetylated by two acetyltransferases, pboB and pboC, to form the final product protubonine B via protubonine C. The polypeptide is Flavin-dependent monooxygenase pboD (Aspergillus ustus).